Here is a 246-residue protein sequence, read N- to C-terminus: Enolase-phosphatase E1 (246 aa).

Asp-15 and Glu-17 together coordinate Mg(2+). Residues 134–135 (SS) and Lys-174 each bind substrate. Asp-201 contacts Mg(2+).

This sequence belongs to the HAD-like hydrolase superfamily. MasA/MtnC family. Monomer. It depends on Mg(2+) as a cofactor.

Its subcellular location is the cytoplasm. The protein localises to the nucleus. It catalyses the reaction 5-methylsulfanyl-2,3-dioxopentyl phosphate + H2O = 1,2-dihydroxy-5-(methylsulfanyl)pent-1-en-3-one + phosphate. It functions in the pathway amino-acid biosynthesis; L-methionine biosynthesis via salvage pathway; L-methionine from S-methyl-5-thio-alpha-D-ribose 1-phosphate: step 3/6. The protein operates within amino-acid biosynthesis; L-methionine biosynthesis via salvage pathway; L-methionine from S-methyl-5-thio-alpha-D-ribose 1-phosphate: step 4/6. In terms of biological role, bifunctional enzyme that catalyzes the enolization of 2,3-diketo-5-methylthiopentyl-1-phosphate (DK-MTP-1-P) into the intermediate 2-hydroxy-3-keto-5-methylthiopentenyl-1-phosphate (HK-MTPenyl-1-P), which is then dephosphorylated to form the acireductone 1,2-dihydroxy-3-keto-5-methylthiopentene (DHK-MTPene). The chain is Enolase-phosphatase E1 from Debaryomyces hansenii (strain ATCC 36239 / CBS 767 / BCRC 21394 / JCM 1990 / NBRC 0083 / IGC 2968) (Yeast).